The sequence spans 339 residues: Starvation-sensing protein RspB (339 aa).

Positions 37, 59, 89, 92, 95, 103, and 144 each coordinate Zn(2+).

It belongs to the zinc-containing alcohol dehydrogenase family. The cofactor is Zn(2+).

Its function is as follows. Not known; probable catabolic enzyme. This chain is Starvation-sensing protein RspB, found in Escherichia coli (strain K12).